Reading from the N-terminus, the 787-residue chain is Pyridoxal-dependent decarboxylase domain-containing protein 1 (787 aa).

The segment covering Glu-29–Lys-41 has biased composition (basic and acidic residues). Residues Glu-29 to Leu-52 form a disordered region. Ser-653 is subject to Phosphoserine. The disordered stretch occupies residues Gln-683–Arg-787. Polar residues predominate over residues Ser-685–Arg-697. Phosphothreonine is present on residues Thr-688 and Thr-692. Ser-711, Ser-719, and Ser-723 each carry phosphoserine. Over residues Gln-735–Ala-745 the composition is skewed to polar residues. 2 positions are modified to phosphoserine: Ser-747 and Ser-785. The segment covering Gln-774–Arg-787 has biased composition (basic and acidic residues).

This sequence belongs to the group II decarboxylase family. The cofactor is pyridoxal 5'-phosphate.

This chain is Pyridoxal-dependent decarboxylase domain-containing protein 1 (PDXDC1), found in Bos taurus (Bovine).